The sequence spans 107 residues: MHTICLRSPIDESSPLPYKSIRQPLENAHSCQALCSLMAVLCASAAHRLSETFPMRLVVAREYANWGAFQHAFTRRAGASVAATSAWFDAVAAGTENAHMQSAESCN.

This is an uncharacterized protein from Saccharomyces cerevisiae (strain ATCC 204508 / S288c) (Baker's yeast).